The sequence spans 340 residues: TATA-box-binding protein (340 aa).

A disordered region spans residues 1–78 (MNLNSPAVSM…HSLQGSSMQM (78 aa)). Residues 57–68 (PQSIQPMQSQQM) are compositionally biased toward low complexity. Residues 69–78 (HSLQGSSMQM) are compositionally biased toward polar residues. 2 consecutive repeat copies span residues 168-244 (LQNI…ARIV) and 258-335 (VQNM…YPIL).

The protein belongs to the TBP family. Component of the TFIID basal transcription factor complex, composed of TATA-box-binding protein tbp-1, and a number of TBP-associated factors (TAFs). Binds DNA as monomer.

The protein resides in the nucleus. In terms of biological role, the TFIID basal transcription factor complex plays a major role in the initiation of RNA polymerase II (Pol II)-dependent transcription. TFIID recognizes and binds promoters via its subunit tbp-1, a TATA-box-binding protein, and promotes assembly of the pre-initiation complex (PIC). The TFIID complex consists of tbp-1 and TBP-associated factors (TAFs). General transcription factor that functions at the core of the TFIID complex. The sequence is that of TATA-box-binding protein (tbp-1) from Caenorhabditis elegans.